The following is a 965-amino-acid chain: Serine/threonine-protein kinase tousled-like 1 (965 aa).

6 disordered regions span residues 1 to 22, 35 to 72, 95 to 120, 172 to 292, 320 to 402, and 538 to 576; these read MSML…GGER, PQNK…ATGD, QNSS…TRSS, NHQQ…KQER, QNQG…QSGR, and RKPL…DDAI. Over residues 10-21 the composition is skewed to gly residues; sequence VAGGGSSSGGGE. Residues 42-52 show a composition bias toward polar residues; sequence TVQSSGSSSNH. The span at 172-231 shows a compositional bias: low complexity; it reads NHQQQMQQMHYHQQQQQYQQQQAQHHQMYAPQIQQQQQQPQQQSQQQSAQQPQQSSAALQ. Polar residues-rich tracts occupy residues 233 to 244 and 320 to 341; these read VNESSNLSSAGS and QNQG…SYDS. Over residues 342–355 the composition is skewed to low complexity; it reads QQQQPQMNQHEMQN. Residues 365-381 are compositionally biased toward polar residues; that stretch reads LGVNNRGTPTPTQQQHY. Positions 382-401 are enriched in low complexity; that stretch reads SSDSNSNSNQSPPGQGNQSG. The span at 552 to 572 shows a compositional bias: polar residues; sequence AVNSQNDSNGMQPSTSSNTNG. Ser634 bears the Phosphoserine mark. In terms of domain architecture, Protein kinase spans 651 to 928; sequence YLMLNLLGKG…VFELAKHELF (278 aa). ATP contacts are provided by residues 657-665 and Lys680; that span reads LGKGGFSEV. The Proton acceptor role is filled by Asp781.

The protein belongs to the protein kinase superfamily. Ser/Thr protein kinase family. Interacts with air-2. In terms of processing, autophosphorylates in vitro. Phosphorylation on Ser-634 by air-2 enhances catalytic activity.

The protein localises to the nucleus. The catalysed reaction is L-seryl-[protein] + ATP = O-phospho-L-seryl-[protein] + ADP + H(+). It carries out the reaction L-threonyl-[protein] + ATP = O-phospho-L-threonyl-[protein] + ADP + H(+). Functionally, essential for appropriate transcription during embryonic development. May act during transcription elongation to activate the RNA polymerase II large subunit (ama-1) by phosphorylating the Ser-2 residues of the C-terminal domain 7-residue repeats. Does not phosphorylate histone H3. The protein is Serine/threonine-protein kinase tousled-like 1 (tlk-1) of Caenorhabditis elegans.